A 266-amino-acid polypeptide reads, in one-letter code: Putative carbamate hydrolase RutD (266 aa).

The protein belongs to the AB hydrolase superfamily. Hydrolase RutD family.

It catalyses the reaction carbamate + 2 H(+) = NH4(+) + CO2. In terms of biological role, involved in pyrimidine catabolism. May facilitate the hydrolysis of carbamate, a reaction that can also occur spontaneously. The sequence is that of Putative carbamate hydrolase RutD from Escherichia coli O157:H7.